The following is a 191-amino-acid chain: MQYDIAAIVEGYAQGYFLMADERDRLSWYGSRDRTFIPLDERFRYPKSLQRVLNQERFTVAINRDFQAVVAGCADRETTWISPELEKIYWLLYQSGYAFSFETWQGDELAGGILGIVIGGAFIGESMFYRIPEGSKVAMVKLVERLRQRKFVFFDAQMMNPHLERFGAYRVKDEGYQVLLEQALQRACNLV.

Belongs to the L/F-transferase family.

The protein resides in the cytoplasm. The catalysed reaction is N-terminal L-lysyl-[protein] + L-leucyl-tRNA(Leu) = N-terminal L-leucyl-L-lysyl-[protein] + tRNA(Leu) + H(+). It carries out the reaction N-terminal L-arginyl-[protein] + L-leucyl-tRNA(Leu) = N-terminal L-leucyl-L-arginyl-[protein] + tRNA(Leu) + H(+). The enzyme catalyses L-phenylalanyl-tRNA(Phe) + an N-terminal L-alpha-aminoacyl-[protein] = an N-terminal L-phenylalanyl-L-alpha-aminoacyl-[protein] + tRNA(Phe). In terms of biological role, functions in the N-end rule pathway of protein degradation where it conjugates Leu, Phe and, less efficiently, Met from aminoacyl-tRNAs to the N-termini of proteins containing an N-terminal arginine or lysine. The sequence is that of Leucyl/phenylalanyl-tRNA--protein transferase from Nostoc punctiforme (strain ATCC 29133 / PCC 73102).